Reading from the N-terminus, the 184-residue chain is NADH-quinone oxidoreductase subunit B (184 aa).

Cys63, Cys64, Cys128, and Cys158 together coordinate [4Fe-4S] cluster.

The protein belongs to the complex I 20 kDa subunit family. NDH-1 is composed of 14 different subunits. Subunits NuoB, C, D, E, F, and G constitute the peripheral sector of the complex. The cofactor is [4Fe-4S] cluster.

It is found in the cell inner membrane. It catalyses the reaction a quinone + NADH + 5 H(+)(in) = a quinol + NAD(+) + 4 H(+)(out). Functionally, NDH-1 shuttles electrons from NADH, via FMN and iron-sulfur (Fe-S) centers, to quinones in the respiratory chain. Couples the redox reaction to proton translocation (for every two electrons transferred, four hydrogen ions are translocated across the cytoplasmic membrane), and thus conserves the redox energy in a proton gradient. This Xanthomonas campestris pv. campestris (strain 8004) protein is NADH-quinone oxidoreductase subunit B.